A 626-amino-acid chain; its full sequence is Glutamate--cysteine ligase (626 aa).

It belongs to the glutamate--cysteine ligase type 3 family. As to quaternary structure, monomer.

It catalyses the reaction L-cysteine + L-glutamate + ATP = gamma-L-glutamyl-L-cysteine + ADP + phosphate + H(+). Its pathway is sulfur metabolism; glutathione biosynthesis; glutathione from L-cysteine and L-glutamate: step 1/2. In terms of biological role, an essential enzyme in glutathione (L-gamma-glutamyl-L-cysteinylglycine, GSH) biosynthesis, GSH is essential for growth and differentiation to prespore stage. Catalyzes the condensation of glutamate to cysteine. The protein is Glutamate--cysteine ligase (gcsA) of Dictyostelium discoideum (Social amoeba).